Consider the following 542-residue polypeptide: Delta 8-(E)-sphingolipid desaturase (542 aa).

In terms of domain architecture, Cytochrome b5 heme-binding spans 1–75 (MVVSREEVRE…FKRWSIGRVK (75 aa)). Heme is bound by residues H35 and H58. The next 2 membrane-spanning stretches (helical) occupy residues 215–235 (WYTL…FIAH) and 248–268 (IDNI…LGWW). Residues 235-239 (HDAGH) carry the Histidine box-1 motif. The short motif at 272 to 276 (HNVHH) is the Histidine box-2 element. 3 helical membrane passes run 329 to 346 (LYYP…RLSW), 360 to 380 (AAWF…WFFY), and 393 to 413 (FWFL…IVLS). The short motif at 455–459 (QAIHH) is the Histidine box-3 element.

It belongs to the fatty acid desaturase type 1 family.

It localises to the membrane. The enzyme catalyses an N-acylsphing-4-enine + 2 Fe(II)-[cytochrome b5] + O2 + 2 H(+) = a (4E,8E)-4-sphinga-4,8-dienine ceramide + 2 Fe(III)-[cytochrome b5] + 2 H2O. It functions in the pathway lipid metabolism; sphingolipid metabolism. Its function is as follows. Delta(8)-fatty-acid desaturase which introduces a double bond at the 8-position in the long-chain base (LCB) of ceramides. Required for the formation of the di-unsaturated sphingoid base (E,E)-sphinga-4,8-dienine during glucosylceramide (GluCer) biosynthesis. This Komagataella phaffii (strain GS115 / ATCC 20864) (Yeast) protein is Delta 8-(E)-sphingolipid desaturase.